The primary structure comprises 1155 residues: MAIYSSFWIRLYFTFRFFCYFLTSVVASDVSFLGDFSGFNVLSNSSANTDLSSQFFEQTNNGSLSSLIDTSYSNSQICYSSWQGDLYVIVLDSEQQTVLLQSNFTSNPTSLEIFSSQNTSFFGNISAIFCDDKFPYAYATFTFSDKPSFTSIYRWNVTNSNVTIEHFYNVKGNVDSLFFLNNDSVAISGNFTEISPFSSSNGPQIAKLAFRSNNSFSQNSLNRNLSSVSCDLTDSYSLWDPSSSGLVSIYAWAPYLIDFNRIRFYNYESSENSVAFFSAINPADGTVLPLTHYDLETGLSSTCDVNCSLQNFANYQDFYFSKGYNSYQIEIQMFGNGEATENSAFGLSSLQFFETNQNSYFDDSYNQESCGFPGLNSLSSYEGNFEASFSNASMPYWIQTIAGEQASVSFFPNITVPTNGTVQLLIPGCTYDNTCSQRGSVIANVYFAKNKQPATKLVQQASDFDQYVSLYSGYLQGFSDNFRPYVELLPYKNSRMVTHSIRFLEQSYTNVSNGLVFVNTTTDVNKLPSIIEFPAASKLRGTAISQIKSLSNGNFSLYMTGNFSDNYGNNVVYMDSLNHLHSFPNNGLNGWVSYIYVSGDSSYFGGNFTHTGDGSIKLNYIAMYSETSRNWSSLGLGTNGPVTHIGSTSLFIDGKIESFISFQGDFNEVYTSEGYAISTSGFSLWNPSSKSWVSMEKLGFYMSGYLFDIPGFNSTQRIYSGNLSAIASYSTRNIAHFSSDSLNDTFIPCYVNAFPSYIRLEDIAYPFANNSMIAILGSEEMEDKCTAAVYFANSTEPIYPKRILSANCSSKFIVLEDCLIIYSNDTDESDIVKNTFVSFNTTSNSLGNTTALSQLKGHINSVIVDDSYNNIFFGGNLSEQSSGCVGFCIFEYNSSSWRNISHNLISAEVQSILWVNETYSSMYLAGKFVWDTSDVDYLLMYNFDNNTIMSCKGSSSIPGPVLLASLKSQSKDEYSVLLYGTEVSSSDTYLNVLNSEGAINSYSLDIHLNQSTINSIDFFESNQISQIPINDSIIVLSGLIVLDDSSKASAVYCVNKSCLPLLTAFKDNGEAGIVRKVVQQKSFSSSASKMIPVTTKYDHIGQPRYVVIISLGISIGVMFLIMSGSIVVEIIHWFFSEHVETLHDYSNFLKELKTQ.

Residues 1–27 (MAIYSSFWIRLYFTFRFFCYFLTSVVA) form the signal peptide. The Extracellular portion of the chain corresponds to 28-1105 (SDVSFLGDFS…KYDHIGQPRY (1078 aa)). N-linked (GlcNAc...) asparagine glycans are attached at residues Asn44, Asn61, Asn103, Asn118, Asn124, Asn156, Asn161, Asn182, Asn190, Asn213, Asn224, Asn306, Asn391, Asn413, Asn419, Asn510, Asn519, Asn554, Asn562, Asn607, Asn630, Asn713, Asn722, Asn743, Asn769, Asn793, Asn807, Asn824, Asn840, Asn848, Asn876, Asn893, Asn899, Asn916, Asn945, Asn1009, Asn1030, and Asn1055. Residues 1106–1126 (VVIISLGISIGVMFLIMSGSI) form a helical membrane-spanning segment. At 1127 to 1155 (VVEIIHWFFSEHVETLHDYSNFLKELKTQ) the chain is on the cytoplasmic side.

This sequence belongs to the RAX2 family. Interacts with for3 and tea1.

It is found in the cell membrane. Controls cell polarity, through the G1 phase of mitosis, via regulation of for3 localization. Required for actin cable formation where it directs the spatial distribution of the actin cables. This chain is Polarized growth protein rax2, found in Schizosaccharomyces pombe (strain 972 / ATCC 24843) (Fission yeast).